Here is a 522-residue protein sequence, read N- to C-terminus: L-tyrosine/L-DOPA decarboxylase 2 (522 aa).

2 tandem repeats follow at residues 75 to 132 (KDVH…TELE) and 135 to 186 (VMDW…GREH). A 2 X approximate tandem repeats region spans residues 75–186 (KDVHDDIVPG…RILDRIGREH (112 aa)). Residues Thr163, Cys164, Thr258, and Asn312 each coordinate pyridoxal 5'-phosphate. At Lys315 the chain carries N6-(pyridoxal phosphate)lysine.

The protein belongs to the group II decarboxylase family. Pyridoxal 5'-phosphate is required as a cofactor. In terms of tissue distribution, strongly expressed in all tissues, particularly in thick roots.

The catalysed reaction is L-tyrosine + H(+) = tyramine + CO2. It carries out the reaction L-dopa + H(+) = dopamine + CO2. Its pathway is aromatic compound metabolism. The protein operates within alkaloid biosynthesis. In terms of biological role, aromatic amino acid decarboxylase participating in the biosynthesis of natural products derived from phenylethylamine, including mescaline, a natural hallucinogen potentially used in psychotherapeutic treatments. Catalyzes the decarboxylation of L-tyrosine and L-DOPA. This chain is L-tyrosine/L-DOPA decarboxylase 2, found in Lophophora williamsii (Peyote).